The following is a 149-amino-acid chain: D-aminoacyl-tRNA deacylase (149 aa).

A Gly-cisPro motif, important for rejection of L-amino acids motif is present at residues 138–139 (GP).

The protein belongs to the DTD family. In terms of assembly, homodimer.

It is found in the cytoplasm. It carries out the reaction glycyl-tRNA(Ala) + H2O = tRNA(Ala) + glycine + H(+). The catalysed reaction is a D-aminoacyl-tRNA + H2O = a tRNA + a D-alpha-amino acid + H(+). In terms of biological role, an aminoacyl-tRNA editing enzyme that deacylates mischarged D-aminoacyl-tRNAs. Also deacylates mischarged glycyl-tRNA(Ala), protecting cells against glycine mischarging by AlaRS. Acts via tRNA-based rather than protein-based catalysis; rejects L-amino acids rather than detecting D-amino acids in the active site. By recycling D-aminoacyl-tRNA to D-amino acids and free tRNA molecules, this enzyme counteracts the toxicity associated with the formation of D-aminoacyl-tRNA entities in vivo and helps enforce protein L-homochirality. This chain is D-aminoacyl-tRNA deacylase, found in Chlorobaculum parvum (strain DSM 263 / NCIMB 8327) (Chlorobium vibrioforme subsp. thiosulfatophilum).